A 219-amino-acid polypeptide reads, in one-letter code: 3,4-dihydroxy-2-butanone 4-phosphate synthase (219 aa).

D-ribulose 5-phosphate-binding positions include 37-38 (RE), Asp42, 150-154 (RRGHT), and Glu174. Glu38 is a Mg(2+) binding site. Mg(2+) is bound at residue His153.

It belongs to the DHBP synthase family. As to quaternary structure, homodimer. Requires Mg(2+) as cofactor. Mn(2+) is required as a cofactor.

The catalysed reaction is D-ribulose 5-phosphate = (2S)-2-hydroxy-3-oxobutyl phosphate + formate + H(+). The protein operates within cofactor biosynthesis; riboflavin biosynthesis; 2-hydroxy-3-oxobutyl phosphate from D-ribulose 5-phosphate: step 1/1. Catalyzes the conversion of D-ribulose 5-phosphate to formate and 3,4-dihydroxy-2-butanone 4-phosphate. This is 3,4-dihydroxy-2-butanone 4-phosphate synthase from Oleidesulfovibrio alaskensis (strain ATCC BAA-1058 / DSM 17464 / G20) (Desulfovibrio alaskensis).